The following is a 364-amino-acid chain: Aminomethyltransferase (364 aa).

Belongs to the GcvT family. In terms of assembly, the glycine cleavage system is composed of four proteins: P, T, L and H.

The catalysed reaction is N(6)-[(R)-S(8)-aminomethyldihydrolipoyl]-L-lysyl-[protein] + (6S)-5,6,7,8-tetrahydrofolate = N(6)-[(R)-dihydrolipoyl]-L-lysyl-[protein] + (6R)-5,10-methylene-5,6,7,8-tetrahydrofolate + NH4(+). Functionally, the glycine cleavage system catalyzes the degradation of glycine. This chain is Aminomethyltransferase, found in Salmonella paratyphi C (strain RKS4594).